The following is a 357-amino-acid chain: Uroporphyrinogen decarboxylase (357 aa).

Residues 27-31 (RQAGR), D77, Y154, S209, and H330 contribute to the substrate site.

Belongs to the uroporphyrinogen decarboxylase family. In terms of assembly, homodimer.

It localises to the cytoplasm. It catalyses the reaction uroporphyrinogen III + 4 H(+) = coproporphyrinogen III + 4 CO2. It functions in the pathway porphyrin-containing compound metabolism; protoporphyrin-IX biosynthesis; coproporphyrinogen-III from 5-aminolevulinate: step 4/4. Functionally, catalyzes the decarboxylation of four acetate groups of uroporphyrinogen-III to yield coproporphyrinogen-III. In Acinetobacter baumannii (strain SDF), this protein is Uroporphyrinogen decarboxylase.